The sequence spans 184 residues: NEDD8-conjugating enzyme Ubc12 (184 aa).

The region spanning 30 to 175 is the UBC core domain; it reads AGELRLHKDI…VRRAMTGGYV (146 aa). Cys113 functions as the Glycyl thioester intermediate in the catalytic mechanism.

The protein belongs to the ubiquitin-conjugating enzyme family. UBC12 subfamily. Interacts with RBX1. In terms of tissue distribution, expressed in shoot, root and floral meristems, and in vascular tissues of leaves.

It functions in the pathway protein modification; protein neddylation. Its function is as follows. Accepts the ubiquitin-like protein NEDD8/RUB1 from the ECR1-AXR1 E1 complex and catalyzes its covalent attachment to other proteins. In Arabidopsis thaliana (Mouse-ear cress), this protein is NEDD8-conjugating enzyme Ubc12 (RCE1).